Here is a 490-residue protein sequence, read N- to C-terminus: Hippocampus abundant transcript 1 protein (490 aa).

Met1 is modified (N-acetylmethionine). The Extracellular segment spans residues 1–40; the sequence is MTQGKKKKRAANRSIMLAKKIIIKDGGTPQGIGSPSVYHA. N-linked (GlcNAc...) asparagine glycosylation occurs at Asn12. Residues 41 to 61 form a helical membrane-spanning segment; that stretch reads VIVIFLEFFAWGLLTAPTLVV. Over 62–74 the chain is Cytoplasmic; the sequence is LHETFPKHTFLMN. A helical membrane pass occupies residues 75–95; that stretch reads GLIQGVKGLLSFLSAPLIGAL. Residues 96–103 are Extracellular-facing; that stretch reads SDVWGRKS. A helical transmembrane segment spans residues 104–124; it reads FLLLTVFFTCAPIPLMKISPW. Over 125–126 the chain is Cytoplasmic; the sequence is WY. A helical transmembrane segment spans residues 127-147; sequence FAVISVSGVFAVTFSVVFAYV. Topologically, residues 148–160 are extracellular; sequence ADITQEHERSMAY. A helical membrane pass occupies residues 161-181; sequence GLVSATFAASLVTSPAIGAYL. Residues 182 to 188 lie on the Cytoplasmic side of the membrane; that stretch reads GRVYGDS. The chain crosses the membrane as a helical span at residues 189–209; the sequence is LVVVLATAIALLDICFILVAV. Topologically, residues 210-243 are extracellular; sequence PESLPEKMRPASWGAPISWEQADPFASLKKVGQD. A helical membrane pass occupies residues 244–264; sequence SIVLLICITVFLSYLPEAGQY. Residues 265–284 lie on the Cytoplasmic side of the membrane; it reads SSFFLYLRQIMKFSPESVAA. A helical membrane pass occupies residues 285 to 305; the sequence is FIAVLGILSIIAQTIVLSLLM. Topologically, residues 306-313 are extracellular; the sequence is RSIGNKNT. A helical transmembrane segment spans residues 314–334; that stretch reads ILLGLGFQILQLAWYGFGSEP. The Cytoplasmic portion of the chain corresponds to 335–337; sequence WMM. The chain crosses the membrane as a helical span at residues 338-358; it reads WAAGAVAAMSSITFPAVSALV. Residues 359 to 379 are Extracellular-facing; that stretch reads SRTADADQQGVVQGMITGIRG. A helical transmembrane segment spans residues 380–400; the sequence is LCNGLGPALYGFIFYIFHVEL. Residues 401-427 are Cytoplasmic-facing; the sequence is KELPITGTDLGTNTSPQHHFEQNSIIP. The helical transmembrane segment at 428 to 448 threads the bilayer; the sequence is GPPFLFGACSVLLALLVALFI. The Extracellular segment spans residues 449–490; sequence PEHTNLSLRSSSWRKHCGSHSHPHNTQAPGEAKEPLLQDTNV. Asn453 carries N-linked (GlcNAc...) asparagine glycosylation. Residues 465–490 are disordered; sequence CGSHSHPHNTQAPGEAKEPLLQDTNV.

This sequence belongs to the major facilitator superfamily.

It is found in the membrane. The polypeptide is Hippocampus abundant transcript 1 protein (Homo sapiens (Human)).